The sequence spans 349 residues: MNKPRYFKEAFAQLKPYEPHLVSYEIKLDANENPYLFPKSLLEEIFSKIGTRDFPLYPDPLAGRLRIRLSEKLGVLPENIVLGNGSDELILCLYLAFGGYGRIALSFSPSFVMYRHHAFVTQTEFFEVSYRDDFSLDLDETKKAIEKYQPHLVFLANPNNPTGTLVDIETIKKLLAYDHLLVVDEAYVEFSGVSAIDLLKKYQNLVILRTFSKARALAGLRLGYLVASVDVVKEIIKVKNPYNVNVFSQIAGEVVLANEEVFQGEIKEIVAERERLYNQLASLGLKPVKSHANFILVEFGEKAKKIHQELINHGILVRYLGGALANYLRITVGTPEENRQLLKKLGEIL.

N6-(pyridoxal phosphate)lysine is present on lysine 213.

It belongs to the class-II pyridoxal-phosphate-dependent aminotransferase family. Histidinol-phosphate aminotransferase subfamily. Homodimer. Requires pyridoxal 5'-phosphate as cofactor.

The catalysed reaction is L-histidinol phosphate + 2-oxoglutarate = 3-(imidazol-4-yl)-2-oxopropyl phosphate + L-glutamate. It participates in amino-acid biosynthesis; L-histidine biosynthesis; L-histidine from 5-phospho-alpha-D-ribose 1-diphosphate: step 7/9. The protein is Histidinol-phosphate aminotransferase 1 of Carboxydothermus hydrogenoformans (strain ATCC BAA-161 / DSM 6008 / Z-2901).